A 422-amino-acid polypeptide reads, in one-letter code: Histidine--tRNA ligase (422 aa).

This sequence belongs to the class-II aminoacyl-tRNA synthetase family. As to quaternary structure, homodimer.

The protein resides in the cytoplasm. It catalyses the reaction tRNA(His) + L-histidine + ATP = L-histidyl-tRNA(His) + AMP + diphosphate + H(+). The sequence is that of Histidine--tRNA ligase from Onion yellows phytoplasma (strain OY-M).